The sequence spans 370 residues: Putative agmatine deiminase (370 aa).

The active-site Amidino-cysteine intermediate is C361.

This sequence belongs to the agmatine deiminase family.

The enzyme catalyses agmatine + H2O = N-carbamoylputrescine + NH4(+). In Shewanella baltica (strain OS155 / ATCC BAA-1091), this protein is Putative agmatine deiminase.